We begin with the raw amino-acid sequence, 614 residues long: Probable NOT transcription complex subunit VIP2 (614 aa).

3 disordered regions span residues 1-46 (MSNL…NLQG), 58-89 (NMQGTLTSRNSSMNSIPSAGVQQPNGSFSSGR), and 361-391 (NLGATYSSHRPQQQPQHTSSTGGLQGLGLRP). Polar residues predominate over residues 364 to 381 (ATYSSHRPQQQPQHTSST).

The protein belongs to the CNOT2/3/5 family. As to quaternary structure, interacts with Agrobacterium tumefaciens VirE2. Binds to VIP1. Forms a complex made of Agrobacterium VirE2, VIP1, VIP2 and single-stranded DNA (ssDNA).

It localises to the nucleus. Its function is as follows. Transcriptional regulator required for Agrobacterium-mediated stable genetic transformation by T-DNA integration in host genome, but not for T-DNA transient expression. This Arabidopsis thaliana (Mouse-ear cress) protein is Probable NOT transcription complex subunit VIP2 (VIP2).